The primary structure comprises 432 residues: Non-peptidase homolog YmxG (432 aa).

A signal peptide spans 1–20 (MKKFLITLLLGVFMGLQASA).

Belongs to the peptidase M16 family.

The protein resides in the secreted. Functionally, may contribute to the full activity of the protease PqqE. The polypeptide is Non-peptidase homolog YmxG (Helicobacter pylori (strain ATCC 700392 / 26695) (Campylobacter pylori)).